The primary structure comprises 918 residues: Dual serine/threonine and tyrosine protein kinase (918 aa).

The segment covering 1-19 has biased composition (basic and acidic residues); sequence MQKDGTRSSRRMEEGDRRN. The segment at 1-29 is disordered; that stretch reads MQKDGTRSSRRMEEGDRRNGSTGSSGSVS. A Protein kinase domain is found at 643–897; the sequence is PRIGRELGRG…PLMGIVQPML (255 aa). Residues 649–657 and Lys-672 each bind ATP; that span reads LGRGQYGVV. Asp-768 acts as the Proton acceptor in catalysis.

The protein belongs to the protein kinase superfamily. Ser/Thr protein kinase family.

Its subcellular location is the cytoplasm. The protein resides in the cell membrane. It is found in the apical cell membrane. It localises to the basolateral cell membrane. The protein localises to the cell junction. The catalysed reaction is L-seryl-[protein] + ATP = O-phospho-L-seryl-[protein] + ADP + H(+). The enzyme catalyses L-threonyl-[protein] + ATP = O-phospho-L-threonyl-[protein] + ADP + H(+). It catalyses the reaction L-tyrosyl-[protein] + ATP = O-phospho-L-tyrosyl-[protein] + ADP + H(+). Its function is as follows. May act as a positive regulator of ERK phosphorylation downstream of fibroblast growth factor-receptor activation. May induce both caspase-dependent apoptosis and caspase-independent cell death. May play a role in the embryonic development. This Xenopus tropicalis (Western clawed frog) protein is Dual serine/threonine and tyrosine protein kinase (dstyk).